The following is a 161-amino-acid chain: Zinc finger protein KNUCKLES (161 aa).

A disordered region spans residues 1 to 33 (MAEPPPSYLHFVGPAKTRSSSKRHSFSSSAHPA). The C2H2-type zinc-finger motif lies at 38-60 (FPCQYCPRKFYTSQALGGHQNAH). A disordered region spans residues 142–161 (GGNGVMEEDEPLDLDLSLRL). The EAR-like (transcriptional repression) motif lies at 155-159 (LDLSL).

First expressed in developing carpel primordia, and later in stamens and ovules of flower buds.

The protein resides in the nucleus. May function as a transcriptional repressor of cellular proliferation that regulates floral determinacy and relative size of basal pattern elements along the proximo-distal axis of the developing gynoecium. This is Zinc finger protein KNUCKLES (KNU) from Arabidopsis thaliana (Mouse-ear cress).